Reading from the N-terminus, the 272-residue chain is PFNPETVYALLAMLISFFVLLASARKENSDEGISFNFTNFTRGDQGVTLLGQANIMANGILALTNHTNPTWNTGRALYSKPVPIWDSATGNVASFVTSFSFVVQEIKGAIPADGIVFFLAPEARIPDNSAGGQLGIVNANKAYNPFVGVEFDTYSNNWDPKSAHIGIDASSLISLRTVKWNKVSGSLVKVSIIYDSLSKTLSVVVTHENGQISTIAQVVDLKAVLGEKVRVGFTAATTTGRELYDIHAWSFTSTLVTATSSTSKNMNIASYA.

Positions 1–29 are cleaved as a signal peptide; sequence PFNPETVYALLAMLISFFVLLASARKENS. 3 N-linked (GlcNAc...) asparagine glycosylation sites follow: N36, N39, and N65. Residues E150 and D152 each contribute to the Mn(2+) site. Ca(2+) contacts are provided by D152, Y154, N156, and D159. The Mn(2+) site is built by D159 and H164.

This sequence belongs to the leguminous lectin family. In terms of assembly, homotetramer. Weak expression in bark. The lectin accumulates in the inner bark in autumn.

Its function is as follows. Bark lectins are storage proteins that probably maintain stocks of nitrogen during dormant period. Self-aggregatable molecules that can bind their own carbohydrate side chains. They could also play a role in the plant's defense against phytophagous invertebrates or herbivorous higher animals. This chain is Putative bark agglutinin LECRPA3, found in Robinia pseudoacacia (Black locust).